A 121-amino-acid chain; its full sequence is ATP synthase epsilon chain (121 aa).

It belongs to the ATPase epsilon chain family. F-type ATPases have 2 components, CF(1) - the catalytic core - and CF(0) - the membrane proton channel. CF(1) has five subunits: alpha(3), beta(3), gamma(1), delta(1), epsilon(1). CF(0) has three main subunits: a, b and c.

It localises to the cell membrane. Produces ATP from ADP in the presence of a proton gradient across the membrane. The polypeptide is ATP synthase epsilon chain (Mycolicibacterium vanbaalenii (strain DSM 7251 / JCM 13017 / BCRC 16820 / KCTC 9966 / NRRL B-24157 / PYR-1) (Mycobacterium vanbaalenii)).